Reading from the N-terminus, the 508-residue chain is Potassium/proton antiporter CemA (508 aa).

5 helical membrane passes run 66–86, 282–302, 386–406, 433–453, and 468–488; these read LFII…LNLL, YQAL…WIIS, ILHL…FILG, ILLL…EVVI, and IISC…KYWI.

This sequence belongs to the CemA family.

It is found in the plastid. The protein resides in the chloroplast inner membrane. The enzyme catalyses K(+)(in) + H(+)(out) = K(+)(out) + H(+)(in). In terms of biological role, contributes to K(+)/H(+) antiport activity by supporting proton efflux to control proton extrusion and homeostasis in chloroplasts in a light-dependent manner to modulate photosynthesis. Prevents excessive induction of non-photochemical quenching (NPQ) under continuous-light conditions. Indirectly promotes efficient inorganic carbon uptake into chloroplasts. The polypeptide is Potassium/proton antiporter CemA (Anthoceros angustus (Hornwort)).